We begin with the raw amino-acid sequence, 880 residues long: Interference hedgehog (880 aa).

The N-terminal stretch at 1 to 20 is a signal peptide; it reads MTLLTSSLLLFSLLTSRLEA. The Extracellular portion of the chain corresponds to 21-703; that stretch reads IPVLEKSPAH…ETFNMSPMLT (683 aa). Ig-like C2-type domains are found at residues 45-142, 155-232, 252-340, and 346-432; these read PGVR…TARL, PESP…ERIQ, PHLL…YIKV, and PQIV…LQVN. Disulfide bonds link Cys68-Cys126, Cys173-Cys220, Cys276-Cys324, and Cys367-Cys414. N-linked (GlcNAc...) asparagine glycans are attached at residues Asn102 and Asn209. Residues 429 to 467 are disordered; the sequence is LQVNPKQIQEPRESGGTHRPNPNQGSKHKQMYPPTPPNV. 2 Fibronectin type-III domains span residues 461-567 and 575-670; these read PPTP…LQPG and VPEL…TQRP. Residue Asn466 is glycosylated (N-linked (GlcNAc...) asparagine). Arg497, Lys501, Lys503, and Arg541 together coordinate heparin. Asn557 carries N-linked (GlcNAc...) asparagine glycosylation. Positions 662 to 692 are disordered; that stretch reads LKQGRTQRPKTSTTEEPTLQMGDRDTTTPSH. Residues 665–678 show a composition bias toward polar residues; sequence GRTQRPKTSTTEEP. N-linked (GlcNAc...) asparagine glycosylation occurs at Asn693. The chain crosses the membrane as a helical span at residues 704–724; sequence GTIGGGAVLILLLISTCLCVC. Topologically, residues 725 to 880 are cytoplasmic; sequence RRRNSRSRGN…SSGSLNSVGV (156 aa). Disordered stretches follow at residues 728-762 and 775-880; these read NSRS…QRQR and QQQQ…SVGV. Low complexity-rich tracts occupy residues 823-837 and 864-880; these read RAGG…NNNN and SSRS…SVGV.

It belongs to the immunoglobulin superfamily. IHOG family. As to quaternary structure, homodimer. Heterotetramer; 2 iHog chains bind 2 hh chains when facilitated by heparin, heparin is required to promote high-affinity interactions between hh and iHog.

Its subcellular location is the membrane. In terms of biological role, mediates response to the active Hedgehog (Hh) protein signal in embryos, functioning upstream or at the level of patched (ptc). In Drosophila simulans (Fruit fly), this protein is Interference hedgehog.